A 175-amino-acid chain; its full sequence is FMRFamide-like neuropeptides 1 (175 aa).

Positions 1–21 (MTLLYQVGLLLLVAATYKVSA) are cleaved as a signal peptide. Residues 22–68 (ECCTPGATSDFCTVFSMLSTMEQNEVMNFIGENCDGDAEVALQKMEK) constitute a propeptide that is removed on maturation. At Tyr-76 the chain carries Tyrosine amide. A propeptide spanning residues 79 to 86 (SAAVKSLG) is cleaved from the precursor. Phe-98, Phe-108, Phe-120, Phe-130, Phe-142, and Phe-154 each carry phenylalanine amide. A propeptide spanning residues 157 to 165 (SFDNFDRES) is cleaved from the precursor. At Phe-173 the chain carries Phenylalanine amide.

It belongs to the FARP (FMRFamide related peptide) family. In terms of processing, may be processed by convertase egl-3. In terms of tissue distribution, each flp gene is expressed in a distinct set of neurons. Flp-1 is expressed in the AVA interneurons, the M5 cholinergic pharyngeal motoneurons, and the AIA, AIY, AVE, AVK, RIG and RMG neurons.

It localises to the secreted. In terms of biological role, together with flp-18, plays a homeostatic role by acting on the GABAergic neural transmission at neuromuscular junctions to prevent overexcitation of the locomotor circuit. Inhibits the activity of dissected pharyngeal myogenic muscle system. Its function is as follows. DPNFLRF-amide: Inhibits the activity of dissected pharyngeal myogenic muscle system. Functionally, acts as a ligand for the npr-22 receptor in vitro. The chain is FMRFamide-like neuropeptides 1 (flp-1) from Caenorhabditis elegans.